A 101-amino-acid polypeptide reads, in one-letter code: Large ribosomal subunit protein uL23 (101 aa).

The protein belongs to the universal ribosomal protein uL23 family. Part of the 50S ribosomal subunit. Contacts protein L29, and trigger factor when it is bound to the ribosome.

In terms of biological role, one of the early assembly proteins it binds 23S rRNA. One of the proteins that surrounds the polypeptide exit tunnel on the outside of the ribosome. Forms the main docking site for trigger factor binding to the ribosome. The chain is Large ribosomal subunit protein uL23 from Corynebacterium efficiens (strain DSM 44549 / YS-314 / AJ 12310 / JCM 11189 / NBRC 100395).